A 190-amino-acid polypeptide reads, in one-letter code: Putative manganese efflux pump MntP (190 aa).

Transmembrane regions (helical) follow at residues Met3–Gly23, Leu41–Ala61, Ser62–Gly82, Leu105–Ala127, Ala143–Gly163, and Val168–Tyr188.

The protein belongs to the MntP (TC 9.B.29) family.

Its subcellular location is the cell inner membrane. Functionally, probably functions as a manganese efflux pump. The sequence is that of Putative manganese efflux pump MntP from Pectobacterium carotovorum subsp. carotovorum (strain PC1).